The sequence spans 522 residues: Cytochrome bd-I ubiquinol oxidase subunit 1 (522 aa).

Residue Met1 is modified to N-formylmethionine. The Cytoplasmic portion of the chain corresponds to 1–22 (MLDIVELSRLQFALTAMYHFLF). Heme b is bound at residue His19. Residues 23-42 (VPLTLGMAFLLAIMETVYVL) traverse the membrane as a helical segment. Residues 43 to 94 (SGKQIYKDMTKFWGKLFGINFALGVATGLTMEFQFGTNWSYYSHYVGDIFGA) lie on the Periplasmic side of the membrane. Residues 95–114 (PLAIEGLMAFFLESTFVGLF) traverse the membrane as a helical segment. Residues 115–129 (FFGWDRLGKVQHMCV) lie on the Cytoplasmic side of the membrane. Residues 130–149 (TWLVALGSNLSALWILVANG) form a helical membrane-spanning segment. Residues 150-187 (WMQNPIASDFNFETMRMEMVSFSELVLNPVAQVKFVHT) lie on the Periplasmic side of the membrane. Residue His186 participates in heme b binding. A helical transmembrane segment spans residues 188 to 207 (VASGYVTGAMFILGISAWYM). The Cytoplasmic portion of the chain corresponds to 208–219 (LKGRDFAFAKRS). A helical membrane pass occupies residues 220 to 239 (FAIAASFGMAAVLSVIVLGD). Residues 240–392 (ESGYEMGDVQ…VAPLYFAFRI (153 aa)) are Periplasmic-facing. Met393 serves as a coordination point for heme b. A helical membrane pass occupies residues 393–412 (MVACGFLLLAIIALSFWSVI). Residues 413–470 (RNRIGEKKWLLRAALYGIPLPWIAVEAGWFVAEYGRQPWAIGEVLPTAVANSSLTAGD) lie on the Cytoplasmic side of the membrane. The chain crosses the membrane as a helical span at residues 471 to 490 (LIFSMVLICGLYTLFLVAEL). Residues 491-522 (FLMFKFARLGPSSLKTGRYHFEQSSTTTQPAR) lie on the Periplasmic side of the membrane.

Belongs to the cytochrome ubiquinol oxidase subunit 1 family. In terms of assembly, heterodimer of subunits I and II. Heme b is required as a cofactor. Requires heme d cis-diol as cofactor.

Its subcellular location is the cell inner membrane. It carries out the reaction 2 a ubiquinol + O2(in) + 4 H(+)(in) = 2 a ubiquinone + 2 H2O(in) + 4 H(+)(out). It functions in the pathway energy metabolism; oxidative phosphorylation. Its function is as follows. A terminal oxidase that produces a proton motive force by the vectorial transfer of protons across the inner membrane. It is the component of the aerobic respiratory chain of E.coli that predominates when cells are grown at low aeration. Generates a proton motive force using protons and electrons from opposite sides of the membrane to generate H(2)O, transferring 1 proton/electron. The polypeptide is Cytochrome bd-I ubiquinol oxidase subunit 1 (cydA) (Escherichia coli O6:H1 (strain CFT073 / ATCC 700928 / UPEC)).